Consider the following 519-residue polypeptide: O-fucosyltransferase 1 (519 aa).

Residues 1–24 (MRRLGHHRLHGKTGGVGTKGMVAK) are Cytoplasmic-facing. Residues 25 to 45 (LSIGVIVLLICTLSLLFSANI) form a helical; Signal-anchor for type II membrane protein membrane-spanning segment. The Lumenal portion of the chain corresponds to 46–519 (GSNREPTRPS…TNSTVTGLER (474 aa)). Residues 67–86 (KSGGWRPSSAPRSDWPPPTK) are disordered. Residue asparagine 118 is glycosylated (N-linked (GlcNAc...) asparagine). Substrate is bound at residue 260–262 (HLR). N-linked (GlcNAc...) asparagine glycosylation is found at asparagine 327, asparagine 357, and asparagine 511. The segment at 497-519 (RLESIRDPDSTSQTNSTVTGLER) is disordered. Residues 506-519 (STSQTNSTVTGLER) show a composition bias toward polar residues.

The protein belongs to the glycosyltransferase GT106 family.

Its subcellular location is the golgi apparatus membrane. Its pathway is glycan metabolism. The protein is O-fucosyltransferase 1 of Arabidopsis thaliana (Mouse-ear cress).